The chain runs to 71 residues: Small ribosomal subunit protein bS18c (71 aa).

The protein belongs to the bacterial ribosomal protein bS18 family. As to quaternary structure, part of the 30S ribosomal subunit.

The protein localises to the plastid. It is found in the chloroplast. This chain is Small ribosomal subunit protein bS18c (rps18), found in Mesostigma viride (Green alga).